Consider the following 210-residue polypeptide: Uracil phosphoribosyltransferase (210 aa).

Residues Arg80, Arg105, and 132–140 (DPMLATGGS) each bind 5-phospho-alpha-D-ribose 1-diphosphate. Uracil contacts are provided by residues Ile195 and 200-202 (GDA). Asp201 lines the 5-phospho-alpha-D-ribose 1-diphosphate pocket.

Belongs to the UPRTase family. It depends on Mg(2+) as a cofactor.

It carries out the reaction UMP + diphosphate = 5-phospho-alpha-D-ribose 1-diphosphate + uracil. It functions in the pathway pyrimidine metabolism; UMP biosynthesis via salvage pathway; UMP from uracil: step 1/1. Allosterically activated by GTP. Its function is as follows. Catalyzes the conversion of uracil and 5-phospho-alpha-D-ribose 1-diphosphate (PRPP) to UMP and diphosphate. The sequence is that of Uracil phosphoribosyltransferase from Deinococcus radiodurans (strain ATCC 13939 / DSM 20539 / JCM 16871 / CCUG 27074 / LMG 4051 / NBRC 15346 / NCIMB 9279 / VKM B-1422 / R1).